The sequence spans 316 residues: Taste receptor type 2 member 109 (316 aa).

The Extracellular portion of the chain corresponds to 1-14 (MEHLLKRTFDITEN). The chain crosses the membrane as a helical span at residues 15-35 (ILLIILFIELIIGLIGNGFTA). Topologically, residues 36-62 (LVHCMDWVKRKKMSLVNKILTALATSR) are cytoplasmic. The chain crosses the membrane as a helical span at residues 63-83 (IFLLWFMLVGFPISSLYPYLV). Topologically, residues 84 to 94 (TTRLMIQFTST) are extracellular. The chain crosses the membrane as a helical span at residues 95–115 (LWTIANHISVWFATCLSVFYF). At 116–135 (LKIANFSNSPFLYLKRRVEK) the chain is on the cytoplasmic side. The helical transmembrane segment at 136 to 156 (VVSVTLLVSLVLLFLNILLLN) threads the bilayer. At 157-191 (LEINMCINEYHQINISYIFISYYHLSCQIQVLGSH) the chain is on the extracellular side. Asn170 is a glycosylation site (N-linked (GlcNAc...) asparagine). A helical transmembrane segment spans residues 192 to 212 (IIFLSVPVVLSLSTFLLLIFS). At 213–241 (LWTLHKRMQQHVQGGRDARTTAHFKALQA) the chain is on the cytoplasmic side. Residues 242–262 (VIAFLLLYSIFILSLLLQFWI) form a helical membrane-spanning segment. Residues 263 to 270 (HGLRKKPP) are Extracellular-facing. Residues 271–291 (FIAFCQVVDTAFPSFHSYVLI) form a helical membrane-spanning segment. The Cytoplasmic portion of the chain corresponds to 292 to 316 (LRDRKLRHASLSVLSWLKCRPNYVK).

Belongs to the G-protein coupled receptor T2R family.

It localises to the membrane. Functionally, putative taste receptor which may play a role in the perception of bitterness. The polypeptide is Taste receptor type 2 member 109 (Mus musculus (Mouse)).